The sequence spans 305 residues: MRIEWACWLFGYFVSSVGSERSLSYRYHLESNSSANVVCNGNISVFVNGTLGVRYNITVGISSSLLIGHLTIQTLESWFTPWVQNKSYSKQPLSTTETLYNIDSENIHRVSQYFHTRWIKSLQENHTCDLTNSTPTYTYQANVNNTNYLTLTSSGWQDRLNYTAINSTHFNLTESNITSIHKYLNTTCIERLRNYTLEPVYTTAVPQNVTPEHAITTLYTTPPNAITIKDTTQSHTVQTPSFNDTHNVTEHTLNISYVLSQKTNNTTSPWVYAIPMGATATIGAGLYIGKHFTPVKFVYEVWRGQ.

Positions Met1–Ser19 are cleaved as a signal peptide. Over Glu20–Trp270 the chain is Lumenal. The helical transmembrane segment at Val271 to Ile288 threads the bilayer. At Gly289–Gln305 the chain is on the cytoplasmic side.

Interacts with host MICA and ULBP3.

It is found in the host endoplasmic reticulum membrane. The protein localises to the host Golgi apparatus membrane. Functionally, participates in the inhibition of the host immune response. Prevents host NK cell-mediated lysis of the infected cell by preventing the KLRK1 ligand 3/ULBP3 trafficking to the cell surface. Also retains another KLRK1 ligand, MHC class I-related chain A/MICA, in the Golgi apparatus to avoid its surface expression. The sequence is that of Membrane glycoprotein UL142 (UL142) from Homo sapiens (Human).